Reading from the N-terminus, the 461-residue chain is MILCSYWHVGLVLLLFSCCGLVLGSEHETRLVANLLENYNKVIRPVEHHTHFVDITVGLQLIQLINVDEVNQIVETNVRLRQQWIDVRLRWNPADYGGIKKIRLPSDDVWLPDLVLYNNADGDFAIVHMTKLLLDYTGKIMWTPPAIFKSYCEIIVTHFPFDQQNCTMKLGIWTYDGTKVSISPESDRPDLSTFMESGEWVMKDYRGWKHWVYYTCCPDTPYLDITYHFIMQRIPLYFVVNVIIPCLLFSFLTVLVFYLPTDSGEKMTLSISVLLSLTVFLLVIVELIPSTSSAVPLIGKYMLFTMIFVISSIIVTVVVINTHHRSPSTHTMPQWVRKIFINTIPNVMFFSTMKRASKEKQENKIFADDIDISDISGKQVTGEVIFQTPLIKNPDVKSAIEGVKYIAEHMKSDEESSNAAEEWKYVAMVIDHILLCVFMLICIIGTVSVFAGRLIELSQEG.

The first 24 residues, 1-24, serve as a signal peptide directing secretion; sequence MILCSYWHVGLVLLLFSCCGLVLG. The Extracellular segment spans residues 25–234; it reads SEHETRLVAN…ITYHFIMQRI (210 aa). 2 disulfide bridges follow: Cys-152-Cys-166 and Cys-216-Cys-217. Asn-165 is a glycosylation site (N-linked (GlcNAc...) asparagine). 3 helical membrane passes run 235 to 259, 267 to 285, and 301 to 320; these read PLYF…VFYL, MTLS…LVIV, and YMLF…VVVI. At 321–432 the chain is on the cytoplasmic side; sequence NTHHRSPSTH…WKYVAMVIDH (112 aa). A helical membrane pass occupies residues 433-451; it reads ILLCVFMLICIIGTVSVFA.

It belongs to the ligand-gated ion channel (TC 1.A.9) family. Acetylcholine receptor (TC 1.A.9.1) subfamily. Alpha-1/CHRNA1 sub-subfamily. In terms of assembly, pentamer of two alpha chains, and one each of the beta, delta, and gamma chains.

The protein resides in the postsynaptic cell membrane. It localises to the cell membrane. It catalyses the reaction K(+)(in) = K(+)(out). The enzyme catalyses Na(+)(in) = Na(+)(out). Functionally, upon acetylcholine binding, the AChR responds by an extensive change in conformation that affects all subunits and leads to opening of an ion-conducting channel across the plasma membrane. The sequence is that of Acetylcholine receptor subunit alpha (CHRNA1) from Torpedo marmorata (Marbled electric ray).